Reading from the N-terminus, the 688-residue chain is Glycine--tRNA ligase beta subunit (688 aa).

Belongs to the class-II aminoacyl-tRNA synthetase family. In terms of assembly, tetramer of two alpha and two beta subunits.

Its subcellular location is the cytoplasm. It catalyses the reaction tRNA(Gly) + glycine + ATP = glycyl-tRNA(Gly) + AMP + diphosphate. The sequence is that of Glycine--tRNA ligase beta subunit from Syntrophotalea carbinolica (strain DSM 2380 / NBRC 103641 / GraBd1) (Pelobacter carbinolicus).